The chain runs to 220 residues: Cysteine-rich venom protein VAR5 (220 aa).

The N-terminal stretch at 1–22 (MILLKLYLTLAAILCQSRGTTS) is a signal peptide. The SCP domain occupies 41–169 (NKHNDLRRTV…PLKYFLVCQY (129 aa)). 5 disulfides stabilise this stretch: C77-C156, C95-C170, C151-C167, C189-C196, and C192-C201. The ShKT domain maps to 205–220 (CEHSNQYINCPDLTKQ).

This sequence belongs to the CRISP family. Post-translationally, contains 8 disulfide bonds. Expressed by the venom gland.

Its subcellular location is the secreted. In terms of biological role, blocks ryanodine receptors, and potassium channels. This chain is Cysteine-rich venom protein VAR5, found in Varanus acanthurus (Ridge-tailed monitor).